A 444-amino-acid chain; its full sequence is C4-dicarboxylate transport protein 1 (444 aa).

Transmembrane regions (helical) follow at residues Ser-9 to Pro-29, Phe-42 to Ile-62, Ser-78 to Tyr-98, Ile-152 to Gln-172, Ile-190 to Thr-210, Leu-221 to Gly-241, Phe-307 to Ala-327, Val-354 to Val-374, and Phe-380 to Ile-400.

It belongs to the dicarboxylate/amino acid:cation symporter (DAACS) (TC 2.A.23) family.

The protein localises to the cell inner membrane. Functionally, responsible for the transport of dicarboxylates such as succinate, fumarate, and malate from the periplasm across the membrane. In Pseudomonas paraeruginosa (strain DSM 24068 / PA7) (Pseudomonas aeruginosa (strain PA7)), this protein is C4-dicarboxylate transport protein 1.